A 285-amino-acid chain; its full sequence is Probable endonuclease 4 (285 aa).

Residues His-69, His-109, Glu-145, Asp-179, His-182, His-216, Asp-229, His-231, and Glu-261 each contribute to the Zn(2+) site.

Belongs to the AP endonuclease 2 family. It depends on Zn(2+) as a cofactor.

It catalyses the reaction Endonucleolytic cleavage to 5'-phosphooligonucleotide end-products.. Its function is as follows. Endonuclease IV plays a role in DNA repair. It cleaves phosphodiester bonds at apurinic or apyrimidinic (AP) sites, generating a 3'-hydroxyl group and a 5'-terminal sugar phosphate. The protein is Probable endonuclease 4 of Shigella boydii serotype 18 (strain CDC 3083-94 / BS512).